Here is a 339-residue protein sequence, read N- to C-terminus: Methionine import ATP-binding protein MetN 2 (339 aa).

Residues 2-241 (ISFNNVSKLY…PKTKTTQNFV (240 aa)) form the ABC transporter domain. An ATP-binding site is contributed by 38–45 (GFSGAGKS).

Belongs to the ABC transporter superfamily. Methionine importer (TC 3.A.1.24) family. The complex is composed of two ATP-binding proteins (MetN), two transmembrane proteins (MetI) and a solute-binding protein (MetQ).

The protein resides in the cell membrane. It catalyses the reaction L-methionine(out) + ATP + H2O = L-methionine(in) + ADP + phosphate + H(+). The enzyme catalyses D-methionine(out) + ATP + H2O = D-methionine(in) + ADP + phosphate + H(+). Functionally, part of the ABC transporter complex MetNIQ involved in methionine import. Responsible for energy coupling to the transport system. This Bacillus cereus (strain ATCC 14579 / DSM 31 / CCUG 7414 / JCM 2152 / NBRC 15305 / NCIMB 9373 / NCTC 2599 / NRRL B-3711) protein is Methionine import ATP-binding protein MetN 2.